We begin with the raw amino-acid sequence, 186 residues long: Prorelaxin 1 (186 aa).

Positions 1 to 22 are cleaved as a signal peptide; the sequence is MSSRLLLQLLGFWLFLSQPCRA. 3 disulfide bridges follow: cysteine 36–cysteine 173, cysteine 48–cysteine 186, and cysteine 172–cysteine 177. Positions 58 to 158 are cleaved as a propeptide — connecting peptide; it reads SQEEPAPLAR…LKYLGSDAQS (101 aa). Glutamine 163 is subject to Pyrrolidone carboxylic acid.

It belongs to the insulin family. Heterodimer of a B chain and an A chain linked by two disulfide bonds.

Its subcellular location is the secreted. Relaxin is an ovarian hormone that acts with estrogen to produce dilatation of the birth canal in many mammals. The chain is Prorelaxin 1 (Rln1) from Rattus norvegicus (Rat).